The sequence spans 213 residues: Redox-sensing transcriptional repressor Rex (213 aa).

Residues 18–57 (LYYRIFKRFHAEKIERANSKQIAEAIGIDSATVRRDFSYF) constitute a DNA-binding region (H-T-H motif). 92–97 (GIGNMG) serves as a coordination point for NAD(+).

It belongs to the transcriptional regulatory Rex family. In terms of assembly, homodimer.

The protein resides in the cytoplasm. Its function is as follows. Modulates transcription in response to changes in cellular NADH/NAD(+) redox state. Binds to the promoter of the aldehyde-alcohol dehydrogenase adhE gene. Functions as a redox-dependent repressor of adhE expression. This Streptococcus pneumoniae (strain ATCC BAA-255 / R6) protein is Redox-sensing transcriptional repressor Rex.